The chain runs to 73 residues: Beta-defensin 39 (73 aa).

An N-terminal signal peptide occupies residues 1-23 (MKISCFLLLVLSLSCFQINSVSG). Disulfide bonds link Cys-29–Cys-58, Cys-36–Cys-51, and Cys-41–Cys-59.

Belongs to the beta-defensin family.

It localises to the secreted. In terms of biological role, has antibacterial activity. This Rattus norvegicus (Rat) protein is Beta-defensin 39 (Defb39).